We begin with the raw amino-acid sequence, 443 residues long: Putative phosphoribosyl transferase MT0597 (443 aa).

This sequence in the N-terminal section; belongs to the purine/pyrimidine phosphoribosyltransferase family. In the C-terminal section; belongs to the dienelactone hydrolase family.

The polypeptide is Putative phosphoribosyl transferase MT0597 (Mycobacterium tuberculosis (strain CDC 1551 / Oshkosh)).